A 643-amino-acid polypeptide reads, in one-letter code: NAD-dependent malic enzyme, mitochondrial (643 aa).

Residues 1–38 (PRVRSFIAHQSGITSVIRRSPDIAHRMVRSLSVSSQRN) constitute a mitochondrion transit peptide. Fumarate-binding residues include Q116, R119, and R143. Y164 functions as the Proton donor in the catalytic mechanism. R219 is a binding site for (S)-malate. R219 serves as a coordination point for NAD(+). K237 (proton acceptor) is an active-site residue. A divalent metal cation-binding residues include E309 and D310. N313, D333, A366, A369, and N472 together coordinate NAD(+). Position 333 (D333) interacts with a divalent metal cation. (S)-malate contacts are provided by N472 and N516.

It belongs to the malic enzymes family. Homotetramer. It depends on Mg(2+) as a cofactor. Mn(2+) is required as a cofactor.

It localises to the mitochondrion matrix. It carries out the reaction (S)-malate + NAD(+) = pyruvate + CO2 + NADH. It catalyses the reaction oxaloacetate + H(+) = pyruvate + CO2. With respect to regulation, subject to allosteric activation by fumarate. In terms of biological role, NAD-dependent mitochondrial malic enzyme that catalyzes the oxidative decarboxylation of malate to pyruvate. The chain is NAD-dependent malic enzyme, mitochondrial from Ascaris suum (Pig roundworm).